The following is a 235-amino-acid chain: Replication protein (235 aa).

Tyrosine 149 contacts DNA.

Belongs to the Gram-positive plasmids replication protein type 1 family.

Produces a single-strand nick in a specific site of the plasmid, and this nick results in single-strand replication by rolling circle mechanism. The protein is Replication protein (repB) of Bacillus sp.